Reading from the N-terminus, the 271-residue chain is Virulence regulon transcriptional activator VirF (271 aa).

One can recognise an HTH araC/xylS-type domain in the interval 167–265; the sequence is ERLQKFMEEN…GCTPSQARLT (99 aa). 2 consecutive DNA-binding regions (H-T-H motif) follow at residues 184 to 205 and 232 to 255; these read SKFAREFGMGLTTFKELFGTVY and IVDIAMEAGFSSQSYFTQSYRRRF.

Its function is as follows. Transcriptional activator of the Yersinia virulence regulon. This chain is Virulence regulon transcriptional activator VirF (virF), found in Yersinia enterocolitica.